A 4763-amino-acid chain; its full sequence is Nonribosomal peptide synthetase sidC (4763 aa).

Residues 1 to 24 form a disordered region; the sequence is MAGTANPADEGLTGPTETTNHINS. Positions 15 to 24 are enriched in polar residues; sequence PTETTNHINS. Positions 296 to 815 are adenylation 1; sequence STVAEHSTLT…SSGKVDRNSI (520 aa). In terms of domain architecture, Carrier 1 spans 853–930; it reads EKALELRTLV…GLLTLILNGK (78 aa). O-(pantetheine 4'-phosphoryl)serine is present on Ser890. The condensation 1 stretch occupies residues 1003-1396; sequence TRSYIYHSVI…DIIAFILQNP (394 aa). Positions 1398 to 1951 are adenylation 2; sequence GDFENALLYT…AKTDRRALQA (554 aa). In terms of domain architecture, Carrier 2 spans 1979-2055; it reads LVASDAMEKI…DLARLCTSSS (77 aa). O-(pantetheine 4'-phosphoryl)serine is present on Ser2016. The segment at 2092–2423 is condensation 2; the sequence is TPIQESLLSE…HIHAREVRRM (332 aa). The interval 2556-3070 is adenylation 3; sequence ELNAREHPEW…MSGKANIKEL (515 aa). A Carrier 3 domain is found at 3099–3175; that stretch reads RPLSSDEEAV…QLAQLPRKST (77 aa). Position 3136 is an O-(pantetheine 4'-phosphoryl)serine (Ser3136). A condensation 3 region spans residues 3217–3626; sequence PLQEGLVARS…DDIALDSFSL (410 aa). The Carrier 4 domain occupies 3647–3720; that stretch reads SATETKIRDL…ALAEHVDERS (74 aa). O-(pantetheine 4'-phosphoryl)serine is present on Ser3681. The condensation 4 stretch occupies residues 3761-4093; sequence TPLQAGMITR…SLFDTLFVFQ (333 aa). The Carrier 5 domain occupies 4204 to 4277; that stretch reads PAHESIIRDV…GISARIISPV (74 aa). Residue Ser4238 is modified to O-(pantetheine 4'-phosphoryl)serine. Residues 4344 to 4593 are condensation 5; that stretch reads ERIDSGKLEE…PCLNVTPFTF (250 aa).

It belongs to the NRP synthetase family.

It participates in siderophore biosynthesis. Functionally, nonribosomal peptide synthase; part of the siderophore biosynthetic pathway. Aspergillus fumigatus produces four types of siderophores, low-molecular-mass iron chelators, including excreted fusarinine C (FsC) and triacetylfusarinine C (TAFC) for iron uptake; and intacellular ferricrocin (FC) for hyphal and hydroxyferricrocin (HFC) for conidial iron distribution and storage. TAFC consists of three N(2)-acetyl-N(5)-anhydromevalonyl-N(5)-hydroxyornithine residues cyclically linked by ester bonds; FC is a cyclic hexapeptide with the structure Gly-Ser-Gly-(N(5)-acetyl-N(5)-hydroxyornithine)x3. The biosynthesis of all four siderophores depends on the hydroxylation of ornithine, catalyzed by the monooxygenase sidA. Subsequently, the pathways for biosynthesis of extra- and intracellular siderophores split. For biosynthesis of extracellular siderophores, the transacylase sidF transfers anhydromevalonyl to N(5)-hydroxyornithine. The required anhydromevalonyl-CoA moiety is derived from mevalonate by CoA ligation and dehydration catalyzed by sidI and sidH respectively. The acetylation of N(5)-hydroxyornithine for FC biosynthesis involves the constitutively expressed sidL. FC is hydroxylated to HFC by an as yet uncharacterized enzyme during conidiation. Assembly of fusarinine C (FsC) and FC is catalyzed by two different nonribosomal peptide synthetases (NRPS), sidD and sidC respectively. Subsequently, sidG catalyzes N2-acetylation of FsC for forming TAFC. Both extra- and intracellular siderophores are crucial for growth during iron limitation and virulence. This is Nonribosomal peptide synthetase sidC from Aspergillus fumigatus (strain ATCC MYA-4609 / CBS 101355 / FGSC A1100 / Af293) (Neosartorya fumigata).